The chain runs to 1340 residues: Protein SHORT ROOT IN SALT MEDIUM 1 (1340 aa).

6 disordered regions span residues 1–73 (MHRD…RSHL), 161–185 (YGEQ…ADPS), 357–473 (EEER…IRRS), 723–750 (TVEV…KKTV), 784–990 (PETT…PPRA), and 1063–1269 (RNQR…KREE). The span at 7-39 (SSRGTGYGQQQYGSQSGYSQNLGSGYPGSSVSG) shows a compositional bias: low complexity. Positions 46 to 60 (QISLSSRHPSITGAP) are enriched in polar residues. 3 stretches are compositionally biased toward basic and acidic residues: residues 173 to 182 (LQNEPTRRYA), 357 to 470 (EEER…EASI), and 723 to 735 (TVEV…KKSP). The stretch at 355 to 426 (LREEERRRED…RERKRALEIK (72 aa)) forms a coiled coil. A compositionally biased stretch (polar residues) spans 810–824 (GDTSDPSAKANEQTP). A compositionally biased stretch (basic residues) spans 828-840 (IVKKKIIKRVAKR). Basic and acidic residues-rich tracts occupy residues 841–872 (KVAE…KKSS), 887–988 (EDVK…EEPP), 1069–1097 (HQEE…DKEA), and 1105–1138 (PGKD…ETLG). A coiled-coil region spans residues 1052–1086 (LKKLRVKIVRQRNQRKRHQEELSVKQNEAKSQDKR). Residues 1153–1204 (ENQDEEDDDGDDDPEEDPEEDPEEDPEEDPEEDPEECEEMDVANTEQEEPAE) show a composition bias toward acidic residues. Composition is skewed to basic and acidic residues over residues 1205–1214 (EPQKKEENLE) and 1229–1257 (TDNR…HGKQ). One can recognise an EF-hand domain in the interval 1270–1305 (TVDKELLQAFRFFDRNQAGYVRVEDMRVTIHSLGKF).

As to quaternary structure, interacts with BHLH148/RITF1. In terms of tissue distribution, expressed ubiquitously at high levels, including in guard cells.

It is found in the nucleus. Functionally, required for salt tolerance and sodium (Na) homeostasis after salt stress. Together with BHLH148/RITF1, regulates the transcription of several genes involved in the detoxification of reactive oxygen species (ROS) generated by salt (NaCl) stress. Binds calcium. This Arabidopsis thaliana (Mouse-ear cress) protein is Protein SHORT ROOT IN SALT MEDIUM 1.